The sequence spans 664 residues: Cyclic nucleotide-gated channel alpha-2 (664 aa).

Over residues 1–10 (MMTEKSNGVK) the composition is skewed to polar residues. Positions 1 to 61 (MMTEKSNGVK…LQRLAEMDTP (61 aa)) are disordered. Residues 1–146 (MMTEKSNGVK…PAGDWYYRWL (146 aa)) are Cytoplasmic-facing. The helical transmembrane segment at 147–168 (FVIAMPVLYNWCLLVARACFSD) threads the bilayer. At 169 to 178 (LQRNYFVVWL) the chain is on the extracellular side. A helical transmembrane segment spans residues 179–199 (VLDYFSDTVYIADLIIRLRTG). Topologically, residues 200 to 224 (FLEQGLLVKDPKKLRDNYIHTLQFK) are cytoplasmic. A helical membrane pass occupies residues 225–243 (LDVASIIPTDLIYFAVGIH). The Extracellular portion of the chain corresponds to 244 to 248 (SPEVR). A helical membrane pass occupies residues 249-267 (FNRLLHFARMFEFFDRTET). Over 268–274 (RTSYPNI) the chain is Cytoplasmic. Residues 272-380 (PNIFRISNLV…GNVGSMISNM (109 aa)) form an ion conduction pathway region. A helical transmembrane segment spans residues 275–298 (FRISNLVLYILVIIHWNACIYYAI). Residues 299-321 (SKSIGFGVDTWVYPNITDPEYGY) lie on the Extracellular side of the membrane. 2 helical membrane passes run 322–356 (LARE…LFVI) and 357–381 (FDFL…SNMN). The selectivity filter stretch occupies residues 339–342 (TIGE). Residues 382–458 (ATRAEFQAKI…STLKKVRIFQ (77 aa)) are C-linker. The Cytoplasmic portion of the chain corresponds to 382 to 664 (ATRAEFQAKI…INTPEPAVAE (283 aa)). The tract at residues 462–582 (AGLLVELVLK…EERGREILMK (121 aa)) is cyclic nucleotide-binding domain. Residues Gly522, Ser525, Arg538, and Thr539 each contribute to the 3',5'-cyclic GMP site. 3',5'-cyclic AMP contacts are provided by Arg538 and Thr539. Residues 599 to 653 (VQEKLEQLETNMETLYTRFARLLAEYTGAQQKLKQRITVLETKMKQNHEDDYLSD) are a coiled coil.

The protein belongs to the cyclic nucleotide-gated cation channel (TC 1.A.1.5) family. CNGA2 subfamily. The olfactory cyclic nucleotide-gated channel is an heterotetramer composed of CNGA2, CNGA4 and CNGB1b subunits with 2:1:1 stoichiometry.

The protein localises to the cell projection. The protein resides in the cilium membrane. The catalysed reaction is Ca(2+)(in) = Ca(2+)(out). It carries out the reaction Na(+)(in) = Na(+)(out). It catalyses the reaction K(+)(in) = K(+)(out). The enzyme catalyses NH4(+)(in) = NH4(+)(out). The catalysed reaction is Rb(+)(in) = Rb(+)(out). It carries out the reaction Li(+)(in) = Li(+)(out). It catalyses the reaction Cs(+)(in) = Cs(+)(out). In terms of biological role, pore-forming subunit of the olfactory cyclic nucleotide-gated channel. Operates in the cilia of olfactory sensory neurons where chemical stimulation of the odorant is converted to an electrical signal. Mediates odorant-induced cAMP-dependent Ca(2+) influx triggering neuron depolarization. The rise of intracellular Ca(2+) levels potentiates the olfactory response by activating Ca(2+)-dependent Cl(-) channels, but it also serves as a negative feedback signal to desensitize the channel for rapid adaptation to odorants. Conducts cAMP- and cGMP-gated ion currents, with permeability for monovalent and divalent cations. The protein is Cyclic nucleotide-gated channel alpha-2 of Mus musculus (Mouse).